The following is a 213-amino-acid chain: Thiamine-phosphate synthase (213 aa).

4-amino-2-methyl-5-(diphosphooxymethyl)pyrimidine-binding positions include 39 to 43 (QYRDK) and Asp-71. Mg(2+) is bound by residues Asp-72 and Asp-91. Ser-108 is a binding site for 4-amino-2-methyl-5-(diphosphooxymethyl)pyrimidine. 135 to 137 (TDT) lines the 2-[(2R,5Z)-2-carboxy-4-methylthiazol-5(2H)-ylidene]ethyl phosphate pocket. Position 138 (Lys-138) interacts with 4-amino-2-methyl-5-(diphosphooxymethyl)pyrimidine. Residues Gly-165 and 185-186 (VS) each bind 2-[(2R,5Z)-2-carboxy-4-methylthiazol-5(2H)-ylidene]ethyl phosphate.

This sequence belongs to the thiamine-phosphate synthase family. Requires Mg(2+) as cofactor.

The enzyme catalyses 2-[(2R,5Z)-2-carboxy-4-methylthiazol-5(2H)-ylidene]ethyl phosphate + 4-amino-2-methyl-5-(diphosphooxymethyl)pyrimidine + 2 H(+) = thiamine phosphate + CO2 + diphosphate. The catalysed reaction is 2-(2-carboxy-4-methylthiazol-5-yl)ethyl phosphate + 4-amino-2-methyl-5-(diphosphooxymethyl)pyrimidine + 2 H(+) = thiamine phosphate + CO2 + diphosphate. It carries out the reaction 4-methyl-5-(2-phosphooxyethyl)-thiazole + 4-amino-2-methyl-5-(diphosphooxymethyl)pyrimidine + H(+) = thiamine phosphate + diphosphate. Its pathway is cofactor biosynthesis; thiamine diphosphate biosynthesis; thiamine phosphate from 4-amino-2-methyl-5-diphosphomethylpyrimidine and 4-methyl-5-(2-phosphoethyl)-thiazole: step 1/1. Functionally, condenses 4-methyl-5-(beta-hydroxyethyl)thiazole monophosphate (THZ-P) and 2-methyl-4-amino-5-hydroxymethyl pyrimidine pyrophosphate (HMP-PP) to form thiamine monophosphate (TMP). This Thermoplasma acidophilum (strain ATCC 25905 / DSM 1728 / JCM 9062 / NBRC 15155 / AMRC-C165) protein is Thiamine-phosphate synthase.